A 649-amino-acid polypeptide reads, in one-letter code: PTS system mannitol-specific EIICBA component (649 aa).

In terms of domain architecture, PTS EIIC type-2 spans Phe13–Glu342. 6 consecutive transmembrane segments (helical) span residues Ile25 to Asn46, Ser51 to Lys71, Ser135 to Lys156, Val166 to Lys186, Ala274 to Val293, and Leu314 to Met335. One can recognise a PTS EIIB type-2 domain in the interval Gln384–Arg475. Cys390 (phosphocysteine intermediate; for EIIB activity) is an active-site residue. Cys390 is subject to Phosphocysteine; by EIIA. A PTS EIIA type-2 domain is found at Phe504–Ser646. His564 (tele-phosphohistidine intermediate; for EIIA activity) is an active-site residue. His564 carries the phosphohistidine; by HPr modification.

As to quaternary structure, homodimer. Post-translationally, an intramolecular phosphotransfer takes places between His-564 and Cys-390.

The protein resides in the cell inner membrane. It carries out the reaction D-mannitol(out) + N(pros)-phospho-L-histidyl-[protein] = D-mannitol 1-phosphate(in) + L-histidyl-[protein]. Functionally, the phosphoenolpyruvate-dependent sugar phosphotransferase system (sugar PTS), a major carbohydrate active transport system, catalyzes the phosphorylation of incoming sugar substrates concomitantly with their translocation across the cell membrane. This system is involved in D-mannitol transport. This chain is PTS system mannitol-specific EIICBA component (mtlA), found in Vibrio cholerae serotype O1 (strain ATCC 39315 / El Tor Inaba N16961).